The sequence spans 176 residues: NAD(P)H-quinone oxidoreductase subunit 6, chloroplastic (176 aa).

5 helical membrane-spanning segments follow: residues 10 to 30 (FILVFLGSGLILGSLGVVFFT), 32 to 52 (TIFSAFSLGLVLVCVSLFYIL), 63 to 83 (LLIYVGAINVLIIFAVMFMNG), 92 to 112 (VWTVGDGITLMVCTSIFISQI), and 152 to 172 (FFLPFELISIILLVALIGAIF).

It belongs to the complex I subunit 6 family. In terms of assembly, NDH is composed of at least 16 different subunits, 5 of which are encoded in the nucleus.

Its subcellular location is the plastid. The protein localises to the chloroplast thylakoid membrane. The enzyme catalyses a plastoquinone + NADH + (n+1) H(+)(in) = a plastoquinol + NAD(+) + n H(+)(out). It carries out the reaction a plastoquinone + NADPH + (n+1) H(+)(in) = a plastoquinol + NADP(+) + n H(+)(out). Functionally, NDH shuttles electrons from NAD(P)H:plastoquinone, via FMN and iron-sulfur (Fe-S) centers, to quinones in the photosynthetic chain and possibly in a chloroplast respiratory chain. The immediate electron acceptor for the enzyme in this species is believed to be plastoquinone. Couples the redox reaction to proton translocation, and thus conserves the redox energy in a proton gradient. The sequence is that of NAD(P)H-quinone oxidoreductase subunit 6, chloroplastic (ndhG) from Phaseolus vulgaris (Kidney bean).